A 412-amino-acid polypeptide reads, in one-letter code: Short-chain specific acyl-CoA dehydrogenase, mitochondrial (412 aa).

Residues M1–R24 constitute a mitochondrion transit peptide. Residue T27 is modified to Phosphothreonine. K51 is modified (N6-acetyllysine; alternate). K51 is modified (N6-succinyllysine; alternate). At K72 the chain carries N6-acetyllysine. K129 is subject to N6-acetyllysine; alternate. K129 carries the post-translational modification N6-succinyllysine; alternate. FAD contacts are provided by residues F152–S161 and W185–T187. A substrate-binding site is contributed by S161. Residue K208 is modified to N6-acetyllysine. The residue at position 262 (K262) is an N6-acetyllysine; alternate. K262 is subject to N6-succinyllysine; alternate. Substrate is bound at residue D269–R272. K292 is modified (N6-acetyllysine). R297 serves as a coordination point for FAD. The residue at position 306 (K306) is an N6-acetyllysine; alternate. K306 is subject to N6-succinyllysine; alternate. FAD-binding positions include Q308 and Q365–G369. E392 acts as the Proton acceptor in catalysis. Residue G393 coordinates substrate. T394–E396 contributes to the FAD binding site.

It belongs to the acyl-CoA dehydrogenase family. In terms of assembly, homotetramer. FAD serves as cofactor.

It is found in the mitochondrion matrix. The enzyme catalyses a short-chain 2,3-saturated fatty acyl-CoA + oxidized [electron-transfer flavoprotein] + H(+) = a short-chain (2E)-enoyl-CoA + reduced [electron-transfer flavoprotein]. It catalyses the reaction butanoyl-CoA + oxidized [electron-transfer flavoprotein] + H(+) = (2E)-butenoyl-CoA + reduced [electron-transfer flavoprotein]. The catalysed reaction is pentanoyl-CoA + oxidized [electron-transfer flavoprotein] + H(+) = (2E)-pentenoyl-CoA + reduced [electron-transfer flavoprotein]. It carries out the reaction hexanoyl-CoA + oxidized [electron-transfer flavoprotein] + H(+) = (2E)-hexenoyl-CoA + reduced [electron-transfer flavoprotein]. The protein operates within lipid metabolism; mitochondrial fatty acid beta-oxidation. Short-chain specific acyl-CoA dehydrogenase is one of the acyl-CoA dehydrogenases that catalyze the first step of mitochondrial fatty acid beta-oxidation, an aerobic process breaking down fatty acids into acetyl-CoA and allowing the production of energy from fats. The first step of fatty acid beta-oxidation consists in the removal of one hydrogen from C-2 and C-3 of the straight-chain fatty acyl-CoA thioester, resulting in the formation of trans-2-enoyl-CoA. Among the different mitochondrial acyl-CoA dehydrogenases, short-chain specific acyl-CoA dehydrogenase acts specifically on acyl-CoAs with saturated 4 to 6 carbons long primary chains. This chain is Short-chain specific acyl-CoA dehydrogenase, mitochondrial (Acads), found in Mus musculus (Mouse).